Reading from the N-terminus, the 1407-residue chain is DNA-directed RNA polymerase subunit beta' (1407 aa).

Zn(2+)-binding residues include Cys-70, Cys-72, Cys-85, and Cys-88. Residues Asp-460, Asp-462, and Asp-464 each coordinate Mg(2+). Zn(2+)-binding residues include Cys-814, Cys-888, Cys-895, and Cys-898.

The protein belongs to the RNA polymerase beta' chain family. In terms of assembly, the RNAP catalytic core consists of 2 alpha, 1 beta, 1 beta' and 1 omega subunit. When a sigma factor is associated with the core the holoenzyme is formed, which can initiate transcription. It depends on Mg(2+) as a cofactor. Requires Zn(2+) as cofactor.

It catalyses the reaction RNA(n) + a ribonucleoside 5'-triphosphate = RNA(n+1) + diphosphate. Functionally, DNA-dependent RNA polymerase catalyzes the transcription of DNA into RNA using the four ribonucleoside triphosphates as substrates. This is DNA-directed RNA polymerase subunit beta' from Buchnera aphidicola subsp. Acyrthosiphon pisum (strain APS) (Acyrthosiphon pisum symbiotic bacterium).